The following is a 301-amino-acid chain: Ribonuclease HIII (301 aa).

The region spanning 90-301 (TPHIGIDESG…LDAILGKVGK (212 aa)) is the RNase H type-2 domain. Residues Asp-96, Glu-97, and Asp-198 each coordinate a divalent metal cation.

It belongs to the RNase HII family. RnhC subfamily. It depends on Mn(2+) as a cofactor. Mg(2+) serves as cofactor.

It is found in the cytoplasm. The catalysed reaction is Endonucleolytic cleavage to 5'-phosphomonoester.. In terms of biological role, endonuclease that specifically degrades the RNA of RNA-DNA hybrids. This Protochlamydia amoebophila (strain UWE25) protein is Ribonuclease HIII.